A 373-amino-acid chain; its full sequence is Peroxisomal biogenesis factor 3 (373 aa).

Residues methionine 1–lysine 15 lie on the Cytoplasmic side of the membrane. Residues methionine 1–alanine 45 are targeting to peroxisomes. The helical transmembrane segment at cysteine 16–lysine 36 threads the bilayer. Residues isoleucine 37–threonine 116 lie on the Peroxisomal side of the membrane. The chain crosses the membrane as a helical span at residues valine 117–isoleucine 140. The tract at residues tyrosine 120–isoleucine 136 is interaction with PEX19. The Cytoplasmic segment spans residues tyrosine 141–lysine 373.

Belongs to the peroxin-3 family. In terms of assembly, interacts with PEX19. As to expression, found in all examined tissues.

The protein localises to the peroxisome membrane. In terms of biological role, involved in peroxisome biosynthesis and integrity. Assembles membrane vesicles before the matrix proteins are translocated. As a docking factor for PEX19, is necessary for the import of peroxisomal membrane proteins in the peroxisomes. The protein is Peroxisomal biogenesis factor 3 (PEX3) of Homo sapiens (Human).